A 156-amino-acid chain; its full sequence is Putative NrdI-like protein (156 aa).

The chain is Putative NrdI-like protein from Streptococcus pneumoniae (strain ATCC BAA-255 / R6).